We begin with the raw amino-acid sequence, 217 residues long: Adenylate kinase (217 aa).

10–15 (GAGKGT) lines the ATP pocket. Residues 30–59 (STGDMLRAAVKAGTEMGLAAKKVMDAGGLV) form an NMP region. Residues Thr-31, Arg-36, 57–59 (GLV), 85–88 (GFPR), and Gln-92 each bind AMP. The interval 122-159 (GRRSHPASGRTYHVKFNPPKVDGVDDVTGEPLVQRDDD) is LID. Residues Arg-123 and 132 to 133 (TY) contribute to the ATP site. Positions 156 and 167 each coordinate AMP. Gly-203 provides a ligand contact to ATP.

Belongs to the adenylate kinase family. As to quaternary structure, monomer.

It is found in the cytoplasm. It carries out the reaction AMP + ATP = 2 ADP. Its pathway is purine metabolism; AMP biosynthesis via salvage pathway; AMP from ADP: step 1/1. Its function is as follows. Catalyzes the reversible transfer of the terminal phosphate group between ATP and AMP. Plays an important role in cellular energy homeostasis and in adenine nucleotide metabolism. In Leptothrix cholodnii (strain ATCC 51168 / LMG 8142 / SP-6) (Leptothrix discophora (strain SP-6)), this protein is Adenylate kinase.